Consider the following 37-residue polypeptide: Large ribosomal subunit protein bL36 (37 aa).

This sequence belongs to the bacterial ribosomal protein bL36 family.

The polypeptide is Large ribosomal subunit protein bL36 (Gloeobacter violaceus (strain ATCC 29082 / PCC 7421)).